Consider the following 160-residue polypeptide: Deoxyuridine 5'-triphosphate nucleotidohydrolase (160 aa).

Substrate contacts are provided by residues 72–74 (RSG), N85, and 89–91 (TID).

This sequence belongs to the dUTPase family. Requires Mg(2+) as cofactor.

It catalyses the reaction dUTP + H2O = dUMP + diphosphate + H(+). It functions in the pathway pyrimidine metabolism; dUMP biosynthesis; dUMP from dCTP (dUTP route): step 2/2. This enzyme is involved in nucleotide metabolism: it produces dUMP, the immediate precursor of thymidine nucleotides and it decreases the intracellular concentration of dUTP so that uracil cannot be incorporated into DNA. The sequence is that of Deoxyuridine 5'-triphosphate nucleotidohydrolase from Methylocella silvestris (strain DSM 15510 / CIP 108128 / LMG 27833 / NCIMB 13906 / BL2).